The chain runs to 318 residues: Glutathione synthetase (318 aa).

In terms of domain architecture, ATP-grasp spans 129–314; it reads KLAITEFPDL…VPEMFAVALE (186 aa). An ATP-binding site is contributed by 155 to 211; the sequence is HAAQGDVIVKPLDGMGGTGIFRLQRSEPNLNAILETLTDNGTRTIMAQRYIPEIVKG. Residues Glu-285 and Asn-287 each coordinate Mg(2+).

This sequence belongs to the prokaryotic GSH synthase family. Mg(2+) serves as cofactor. It depends on Mn(2+) as a cofactor.

It carries out the reaction gamma-L-glutamyl-L-cysteine + glycine + ATP = glutathione + ADP + phosphate + H(+). It participates in sulfur metabolism; glutathione biosynthesis; glutathione from L-cysteine and L-glutamate: step 2/2. The chain is Glutathione synthetase from Bordetella bronchiseptica (strain ATCC BAA-588 / NCTC 13252 / RB50) (Alcaligenes bronchisepticus).